The sequence spans 194 residues: dCTP deaminase (194 aa).

Residues Arg110–Arg115, Asp128, Val136–Glu138, Tyr171, Lys178, and Gln182 contribute to the dCTP site. Glu138 (proton donor/acceptor) is an active-site residue. The interval Arg174 to Lys194 is disordered.

The protein belongs to the dCTP deaminase family. Homotrimer.

It catalyses the reaction dCTP + H2O + H(+) = dUTP + NH4(+). The protein operates within pyrimidine metabolism; dUMP biosynthesis; dUMP from dCTP (dUTP route): step 1/2. Its function is as follows. Catalyzes the deamination of dCTP to dUTP. In Shewanella frigidimarina (strain NCIMB 400), this protein is dCTP deaminase.